The primary structure comprises 266 residues: 4-hydroxy-tetrahydrodipicolinate reductase (266 aa).

NAD(+) is bound at residue 11 to 16; sequence GALGKM. Lysine 39 provides a ligand contact to NADP(+). Position 100 to 102 (100 to 102) interacts with NAD(+); the sequence is GTT. The active-site Proton donor/acceptor is the histidine 156. Position 157 (histidine 157) interacts with (S)-2,3,4,5-tetrahydrodipicolinate. Lysine 160 (proton donor) is an active-site residue. 166-167 is a binding site for (S)-2,3,4,5-tetrahydrodipicolinate; that stretch reads GT.

This sequence belongs to the DapB family.

The protein resides in the cytoplasm. It carries out the reaction (S)-2,3,4,5-tetrahydrodipicolinate + NAD(+) + H2O = (2S,4S)-4-hydroxy-2,3,4,5-tetrahydrodipicolinate + NADH + H(+). The catalysed reaction is (S)-2,3,4,5-tetrahydrodipicolinate + NADP(+) + H2O = (2S,4S)-4-hydroxy-2,3,4,5-tetrahydrodipicolinate + NADPH + H(+). Its pathway is amino-acid biosynthesis; L-lysine biosynthesis via DAP pathway; (S)-tetrahydrodipicolinate from L-aspartate: step 4/4. Catalyzes the conversion of 4-hydroxy-tetrahydrodipicolinate (HTPA) to tetrahydrodipicolinate. The chain is 4-hydroxy-tetrahydrodipicolinate reductase from Syntrophomonas wolfei subsp. wolfei (strain DSM 2245B / Goettingen).